The chain runs to 188 residues: Pro-adrenomedullin (188 aa).

A signal peptide spans 1-21 (MKLVPVALLYLGSLAFLGADT). R41 carries the arginine amide modification. A propeptide spanning residues 45-92 (ELRVSSSYPTGLAEVKAGPAQTLIRTQDVKGASRNPQTSGPDAARIRV) is cleaved from the precursor. Cysteines 110 and 115 form a disulfide. The segment at 131 to 176 (DKDGVAPRSKISPQGYGRRRRRSLPEPGLRRTLLFPEPRPGGAPAP) is disordered. Y146 carries the post-translational modification Tyrosine amide. A propeptide spans 153–188 (SLPEPGLRRTLLFPEPRPGGAPAPRAHQVLANLLKM) (preproAM C-terminal fragment).

It belongs to the adrenomedullin family.

The protein localises to the secreted. Its function is as follows. Adrenomedullin/ADM and proadrenomedullin N-20 terminal peptide/PAMP are peptide hormones that act as potent hypotensive and vasodilatator agents. Numerous actions have been reported most related to the physiologic control of fluid and electrolyte homeostasis. ADM function is mediated by the CALCRL-RAMP2 and CALCRL-RAMP3 receptor complexes with ADM showing the highest potency for the CALCRL-RAMP2 complex. This Canis lupus familiaris (Dog) protein is Pro-adrenomedullin (ADM).